Reading from the N-terminus, the 262-residue chain is Ribosome-recycling factor, mitochondrial (262 aa).

The N-terminal 55 residues, 1–55 (MALGIRCFRLLHPAFSSYLADLSRPVSEVPMKTVRGRQRDHIQYSAHPAVPVRQF), are a transit peptide targeting the mitochondrion.

The protein belongs to the RRF family.

It localises to the mitochondrion. In terms of biological role, responsible for the disassembly of ribosomes from messenger RNA at the termination of mitochondrial protein biosynthesis. Acts in collaboration with GFM2. Promotes mitochondrial ribosome recycling by dissolution of intersubunit contacts. In Rattus norvegicus (Rat), this protein is Ribosome-recycling factor, mitochondrial (Mrrf).